The primary structure comprises 241 residues: MTESNETPNTPEAGDESKHRRIKSFVMRAGRMTEGQQKGLEQGTPLFVLPLADAPVDYDQVFGRSAPRSLEIGFGMGHSLLEMAAAAPDQDFIGVEVHRPGVGALLNGVLTQGLTNLRVYDCDAIEVLNRCIADNSLDRLMLFFPDPWHKARHHKRRIVQASFAELVRSKLKVGGILHMATDWEPYAEYMLEVMNVAPGYRNLAEDGKCVPRPAERPITKFERRGERLGHGVWDLKFEKLA.

Residues 1–10 (MTESNETPNT) show a composition bias toward polar residues. The interval 1–21 (MTESNETPNTPEAGDESKHRR) is disordered. Residues Glu71, Glu96, Asp123, and Asp146 each coordinate S-adenosyl-L-methionine. Residue Asp146 is part of the active site. Residues Lys150, Asp182, and 219-222 (TKFE) contribute to the substrate site.

This sequence belongs to the class I-like SAM-binding methyltransferase superfamily. TrmB family.

The catalysed reaction is guanosine(46) in tRNA + S-adenosyl-L-methionine = N(7)-methylguanosine(46) in tRNA + S-adenosyl-L-homocysteine. Its pathway is tRNA modification; N(7)-methylguanine-tRNA biosynthesis. Functionally, catalyzes the formation of N(7)-methylguanine at position 46 (m7G46) in tRNA. The sequence is that of tRNA (guanine-N(7)-)-methyltransferase from Pseudomonas fluorescens (strain SBW25).